The following is a 1318-amino-acid chain: DNA-directed RNA polymerase subunit beta' (1318 aa).

Residues cysteine 60, cysteine 62, cysteine 75, and cysteine 78 each contribute to the Zn(2+) site. Mg(2+)-binding residues include aspartate 535, aspartate 537, and aspartate 539. Zn(2+)-binding residues include cysteine 890, cysteine 967, cysteine 974, and cysteine 977.

It belongs to the RNA polymerase beta' chain family. In terms of assembly, the RNAP catalytic core consists of 2 alpha, 1 beta, 1 beta' and 1 omega subunit. When a sigma factor is associated with the core the holoenzyme is formed, which can initiate transcription. It depends on Mg(2+) as a cofactor. Zn(2+) is required as a cofactor.

It catalyses the reaction RNA(n) + a ribonucleoside 5'-triphosphate = RNA(n+1) + diphosphate. In terms of biological role, DNA-dependent RNA polymerase catalyzes the transcription of DNA into RNA using the four ribonucleoside triphosphates as substrates. The chain is DNA-directed RNA polymerase subunit beta' from Rhodococcus erythropolis (strain PR4 / NBRC 100887).